The primary structure comprises 367 residues: S-adenosylmethionine:tRNA ribosyltransferase-isomerase (367 aa).

Residues 150 to 182 (RHGEEEESSDEAISSQNPEIATESKRTPSNDDK) form a disordered region. The span at 171 to 182 (TESKRTPSNDDK) shows a compositional bias: basic and acidic residues.

The protein belongs to the QueA family. In terms of assembly, monomer.

It localises to the cytoplasm. The enzyme catalyses 7-aminomethyl-7-carbaguanosine(34) in tRNA + S-adenosyl-L-methionine = epoxyqueuosine(34) in tRNA + adenine + L-methionine + 2 H(+). The protein operates within tRNA modification; tRNA-queuosine biosynthesis. Transfers and isomerizes the ribose moiety from AdoMet to the 7-aminomethyl group of 7-deazaguanine (preQ1-tRNA) to give epoxyqueuosine (oQ-tRNA). This Rickettsia felis (strain ATCC VR-1525 / URRWXCal2) (Rickettsia azadi) protein is S-adenosylmethionine:tRNA ribosyltransferase-isomerase.